Here is a 751-residue protein sequence, read N- to C-terminus: Catalase-peroxidase (751 aa).

A signal peptide spans Met-1–Ala-12. A cross-link (tryptophyl-tyrosyl-methioninium (Trp-Tyr) (with M-267)) is located at residues Trp-91–Tyr-241. His-92 (proton acceptor) is an active-site residue. A cross-link (tryptophyl-tyrosyl-methioninium (Tyr-Met) (with W-91)) is located at residues Tyr-241 to Met-267. His-282 is a heme b binding site.

The protein belongs to the peroxidase family. Peroxidase/catalase subfamily. Homodimer or homotetramer. Heme b is required as a cofactor. Post-translationally, formation of the three residue Trp-Tyr-Met cross-link is important for the catalase, but not the peroxidase activity of the enzyme.

The catalysed reaction is H2O2 + AH2 = A + 2 H2O. It carries out the reaction 2 H2O2 = O2 + 2 H2O. Bifunctional enzyme with both catalase and broad-spectrum peroxidase activity. This is Catalase-peroxidase from Cupriavidus necator (strain ATCC 17699 / DSM 428 / KCTC 22496 / NCIMB 10442 / H16 / Stanier 337) (Ralstonia eutropha).